The chain runs to 277 residues: MQQDSHTHGIDMSALGRNKQGLQLAEETVAIEVPGLSLFYGDKQALFDVSMNIPKQRVTAFIGPSGCGKSTLLRTFNRMNDLVDGCRVEGAINLYGNNIYRKGEDVAELRRRVGMVFQKPNPFPKTIYENVVYGLRIQGINKKRVLDEAVEWALKGAALWDEVKDRLHESALGLSGGQQQRLVIARTIAVEPEVLLLDEPCSALDPISTLKVEELIYELKSKYTIVIVTHNMQQAARVSDYTAFMYLGKLVEFGDTDTLFTNPAKKQTEDYITGRYG.

Residues 31–272 enclose the ABC transporter domain; it reads IEVPGLSLFY…PAKKQTEDYI (242 aa). Residue 63–70 participates in ATP binding; it reads GPSGCGKS.

This sequence belongs to the ABC transporter superfamily. Phosphate importer (TC 3.A.1.7) family. As to quaternary structure, the complex is composed of two ATP-binding proteins (PstB), two transmembrane proteins (PstC and PstA) and a solute-binding protein (PstS).

The protein resides in the cell inner membrane. It catalyses the reaction phosphate(out) + ATP + H2O = ADP + 2 phosphate(in) + H(+). Functionally, part of the ABC transporter complex PstSACB involved in phosphate import. Responsible for energy coupling to the transport system. This chain is Phosphate import ATP-binding protein PstB, found in Pseudomonas putida (Arthrobacter siderocapsulatus).